A 304-amino-acid polypeptide reads, in one-letter code: Aspartate carbamoyltransferase catalytic subunit (304 aa).

Residues Arg-49 and Thr-50 each contribute to the carbamoyl phosphate site. An L-aspartate-binding site is contributed by Lys-77. Residues Arg-99, His-127, and Gln-130 each coordinate carbamoyl phosphate. The L-aspartate site is built by Arg-160 and Arg-211. Residues Ala-250 and Pro-251 each coordinate carbamoyl phosphate.

The protein belongs to the aspartate/ornithine carbamoyltransferase superfamily. ATCase family. Heterododecamer (2C3:3R2) of six catalytic PyrB chains organized as two trimers (C3), and six regulatory PyrI chains organized as three dimers (R2).

The catalysed reaction is carbamoyl phosphate + L-aspartate = N-carbamoyl-L-aspartate + phosphate + H(+). Its pathway is pyrimidine metabolism; UMP biosynthesis via de novo pathway; (S)-dihydroorotate from bicarbonate: step 2/3. Catalyzes the condensation of carbamoyl phosphate and aspartate to form carbamoyl aspartate and inorganic phosphate, the committed step in the de novo pyrimidine nucleotide biosynthesis pathway. The chain is Aspartate carbamoyltransferase catalytic subunit from Bacillus velezensis (strain DSM 23117 / BGSC 10A6 / LMG 26770 / FZB42) (Bacillus amyloliquefaciens subsp. plantarum).